A 170-amino-acid chain; its full sequence is Photosystem I assembly protein Ycf3 (170 aa).

TPR repeat units lie at residues 35–69, 73–106, and 121–154; these read AFTY…EIDP, SYIL…NPSL, and GEQA…APGN.

The protein belongs to the Ycf3 family.

It is found in the plastid. The protein resides in the chloroplast thylakoid membrane. Its function is as follows. Essential for the assembly of the photosystem I (PSI) complex. May act as a chaperone-like factor to guide the assembly of the PSI subunits. This Cycas taitungensis (Prince sago) protein is Photosystem I assembly protein Ycf3.